A 200-amino-acid polypeptide reads, in one-letter code: NADH-quinone oxidoreductase subunit C (200 aa).

This sequence belongs to the complex I 30 kDa subunit family. As to quaternary structure, NDH-1 is composed of 14 different subunits. Subunits NuoB, C, D, E, F, and G constitute the peripheral sector of the complex.

The protein localises to the cell inner membrane. It carries out the reaction a quinone + NADH + 5 H(+)(in) = a quinol + NAD(+) + 4 H(+)(out). Functionally, NDH-1 shuttles electrons from NADH, via FMN and iron-sulfur (Fe-S) centers, to quinones in the respiratory chain. The immediate electron acceptor for the enzyme in this species is believed to be ubiquinone. Couples the redox reaction to proton translocation (for every two electrons transferred, four hydrogen ions are translocated across the cytoplasmic membrane), and thus conserves the redox energy in a proton gradient. This is NADH-quinone oxidoreductase subunit C from Ruegeria pomeroyi (strain ATCC 700808 / DSM 15171 / DSS-3) (Silicibacter pomeroyi).